The sequence spans 120 residues: MRLPAQLLGLLMLWIPGSSADIVMTQTPLSLSVTPGQPASISCKSSQSLLHSDGKTYLYWYLQKPGQSPQLLIYEVSSRFSGVPDRFSGSGSGTDFTLKISRVEAEDVGVYYCMQGIHLP.

Residues 1-20 (MRLPAQLLGLLMLWIPGSSA) form the signal peptide. A framework-1 region spans residues 21–43 (DIVMTQTPLSLSVTPGQPASISC). The 100-residue stretch at 21–120 (DIVMTQTPLS…YYCMQGIHLP (100 aa)) folds into the Ig-like domain. A disulfide bridge connects residues cysteine 43 and cysteine 113. The segment at 44–59 (KSSQSLLHSDGKTYLY) is complementarity-determining-1. A framework-2 region spans residues 60 to 74 (WYLQKPGQSPQLLIY). The interval 75 to 81 (EVSSRFS) is complementarity-determining-2. The interval 82–113 (GVPDRFSGSGSGTDFTLKISRVEAEDVGVYYC) is framework-3. The segment at 114 to 120 (MQGIHLP) is complementarity-determining-3.

Immunoglobulins are composed of two identical heavy chains and two identical light chains; disulfide-linked.

The protein localises to the secreted. Its subcellular location is the cell membrane. V region of the variable domain of immunoglobulin light chains that participates in the antigen recognition. Immunoglobulins, also known as antibodies, are membrane-bound or secreted glycoproteins produced by B lymphocytes. In the recognition phase of humoral immunity, the membrane-bound immunoglobulins serve as receptors which, upon binding of a specific antigen, trigger the clonal expansion and differentiation of B lymphocytes into immunoglobulins-secreting plasma cells. Secreted immunoglobulins mediate the effector phase of humoral immunity, which results in the elimination of bound antigens. The antigen binding site is formed by the variable domain of one heavy chain, together with that of its associated light chain. Thus, each immunoglobulin has two antigen binding sites with remarkable affinity for a particular antigen. The variable domains are assembled by a process called V-(D)-J rearrangement and can then be subjected to somatic hypermutations which, after exposure to antigen and selection, allow affinity maturation for a particular antigen. This is Immunoglobulin kappa variable 2-29 from Homo sapiens (Human).